The sequence spans 330 residues: MLYTDGEKVLCFHGPLIYAAKILKAEKWTGEENVTGQVGPHYLVHYDGWKKTWDEWVPETRLLKHNDENLARKATLQEAAKAGSLISSAEKSAASTSAASSLKRAKDSELPDRKSASRGTKRSREHVEAEEEFLKRPEVKISLPDELKLQLVDDWENITKNGQLVPLPRNPCVKDILDDYRKHYLASKRSDPSKQRSPQLVDEVLKGLKLYFDRSLGQNLLYRFERAQYVDYRKKNGPKMGDGDVGNARTANGSMGGEMEPSNVYGAEHLLRLFVTLPMIIVHTSMDAESISLLKEHLAEFLSYIVREKHRLFVREYETASPAYHRISST.

In terms of domain architecture, Tudor-knot spans 5 to 62; sequence DGEKVLCFHGPLIYAAKILKAEKWTGEENVTGQVGPHYLVHYDGWKKTWDEWVPETRL. The disordered stretch occupies residues 96 to 129; the sequence is TSAASSLKRAKDSELPDRKSASRGTKRSREHVEA. The span at 104–115 shows a compositional bias: basic and acidic residues; that stretch reads RAKDSELPDRKS. The MRG domain maps to 135–329; that stretch reads KRPEVKISLP…ASPAYHRISS (195 aa).

Belongs to the MRG family. Component of the NuA4 histone acetyltransferase complex.

Its subcellular location is the nucleus. Involved in deacetylation of histones, chromatin assembly and chromosome segregation. May act as a transcriptional oscillator, directing histone deacetylases to specific chromosomal domains. Component of the NuA4 histone acetyltransferase complex which is involved in transcriptional activation of selected genes principally by acetylation of nucleosomal histone H4 and H2A. The NuA4 complex is also involved in DNA repair. This is Chromatin modification-related protein EAF3 (EAF3) from Mycosarcoma maydis (Corn smut fungus).